The chain runs to 794 residues: DNA ligase (794 aa).

Residues 35-39, 84-85, and Glu-126 contribute to the NAD(+) site; these read DAEYD and SL. Lys-128 functions as the N6-AMP-lysine intermediate in the catalytic mechanism. Positions 149, 186, 302, and 326 each coordinate NAD(+). The Zn(2+) site is built by Cys-420, Cys-423, Cys-450, and Cys-456. Residues 711 to 794 form the BRCT domain; the sequence is VEGLPLAGQT…KLFDEHGVAR (84 aa).

It belongs to the NAD-dependent DNA ligase family. LigA subfamily. Mg(2+) is required as a cofactor. The cofactor is Mn(2+).

It catalyses the reaction NAD(+) + (deoxyribonucleotide)n-3'-hydroxyl + 5'-phospho-(deoxyribonucleotide)m = (deoxyribonucleotide)n+m + AMP + beta-nicotinamide D-nucleotide.. Functionally, DNA ligase that catalyzes the formation of phosphodiester linkages between 5'-phosphoryl and 3'-hydroxyl groups in double-stranded DNA using NAD as a coenzyme and as the energy source for the reaction. It is essential for DNA replication and repair of damaged DNA. The polypeptide is DNA ligase (Pseudomonas aeruginosa (strain UCBPP-PA14)).